A 1309-amino-acid polypeptide reads, in one-letter code: Disease resistance protein RPP2A (1309 aa).

The region spanning Arg9–Leu173 is the TIR 1 domain. Residue Glu84 is part of the active site. In terms of domain architecture, NB-ARC 1 spans Glu187–Pro418. An ALOG domain is found at Pro488 to His585. The region spanning Arg574 to Leu737 is the TIR 2 domain. Residues Ser755–Arg987 form the NB-ARC 2 domain. Residues Leu1114 to Lys1141 adopt a coiled-coil conformation. LRR repeat units follow at residues Val1145–Leu1167, Glu1168–His1195, Cys1214–Leu1237, Thr1238–Ala1258, Pro1259–Glu1283, and Val1285–Arg1307.

This sequence belongs to the disease resistance TIR-NB-LRR family.

It catalyses the reaction NAD(+) + H2O = ADP-D-ribose + nicotinamide + H(+). Disease resistance protein that cooperates with RPP2B to confer resistance to Hyaloperonospora parasitica isolate Cala2. The sequence is that of Disease resistance protein RPP2A from Arabidopsis thaliana (Mouse-ear cress).